We begin with the raw amino-acid sequence, 300 residues long: Ribosomal protein L11 methyltransferase (300 aa).

Residues Thr152, Gly173, Asp195, and Asn234 each coordinate S-adenosyl-L-methionine.

This sequence belongs to the methyltransferase superfamily. PrmA family.

It localises to the cytoplasm. The catalysed reaction is L-lysyl-[protein] + 3 S-adenosyl-L-methionine = N(6),N(6),N(6)-trimethyl-L-lysyl-[protein] + 3 S-adenosyl-L-homocysteine + 3 H(+). Methylates ribosomal protein L11. This is Ribosomal protein L11 methyltransferase from Burkholderia cenocepacia (strain HI2424).